Reading from the N-terminus, the 378-residue chain is MDIPPLAGRTVAMSFCALPVSYLLNQVSAFSQPLFVVLTSALILGLLFLAVYSLSHGEITYDPLYAVFVIFSFTSVVDLVIALQEDGYMMGFMDFYTKEGEPYLRTAHGIFICYWDGTVHYLLYLTMAGAIRKRKRYRNLGLYWLGSFAMSILVFLPGNILGKYSSEMRPTFFLAILYMLVPCWAGVRIFNQSRAPTSYTPDMVQEEQKKSLLQRPADLALIVYLIFAALFTVFRGLVVLDCPTDACFIYIYQYEPYLRDPVAYPKLQMLMYLFYALPFYCLAAYALAFPGCSWLPDWALVFAGAIGQAQFSHMGASMHMRTPFTYRVPEDTWATFFLSNLLLALGPHLLAFRCLWRPAFFLHAALPSSPQDQDKKQQ.

10 consecutive transmembrane segments (helical) span residues 10–30 (TVAMSFCALPVSYLLNQVSAF), 34–54 (LFVVLTSALILGLLFLAVYSL), 63–83 (PLYAVFVIFSFTSVVDLVIAL), 110–130 (IFICYWDGTVHYLLYLTMAGA), 140–160 (LGLYWLGSFAMSILVFLPGNI), 170–190 (PTFFLAILYMLVPCWAGVRIF), 219–239 (LALIVYLIFAALFTVFRGLVV), 269–289 (MLMYLFYALPFYCLAAYALAF), 291–311 (GCSWLPDWALVFAGAIGQAQF), and 332–352 (TWATFFLSNLLLALGPHLLAF). EXPERA domains are found at residues 61–186 (YDPL…CWAG) and 217–351 (ADLA…HLLA).

This sequence belongs to the TM6SF family. In terms of tissue distribution, highly expressed in the liver at both the mRNA and protein levels.

Its subcellular location is the endoplasmic reticulum membrane. It localises to the endoplasmic reticulum-Golgi intermediate compartment membrane. Its function is as follows. Regulator of liver fat metabolism influencing triglyceride secretion and hepatic lipid droplet content. May function as sterol isomerase. The chain is Transmembrane 6 superfamily member 2 (Tm6sf2) from Mus musculus (Mouse).